Reading from the N-terminus, the 255-residue chain is 4-diphosphocytidyl-2-C-methyl-D-erythritol kinase (255 aa).

Lys6 is an active-site residue. Residue 95–105 (PVCAGLGGGSS) coordinates ATP. The active site involves Asp137.

The protein belongs to the GHMP kinase family. IspE subfamily.

It carries out the reaction 4-CDP-2-C-methyl-D-erythritol + ATP = 4-CDP-2-C-methyl-D-erythritol 2-phosphate + ADP + H(+). The protein operates within isoprenoid biosynthesis; isopentenyl diphosphate biosynthesis via DXP pathway; isopentenyl diphosphate from 1-deoxy-D-xylulose 5-phosphate: step 3/6. Its function is as follows. Catalyzes the phosphorylation of the position 2 hydroxy group of 4-diphosphocytidyl-2C-methyl-D-erythritol. This is 4-diphosphocytidyl-2-C-methyl-D-erythritol kinase from Campylobacter jejuni subsp. jejuni serotype O:6 (strain 81116 / NCTC 11828).